A 300-amino-acid polypeptide reads, in one-letter code: MEINYWYKLTFEIEANLEEIIIWKLNELGISSYALEILLNNKNNKKVLIWLPNLNWPKSLRIKLERNIKEVLDKNNYRTNCFEWIVIEQEDWMSSWKKYWGPELVGKKLLVLPCWLELPEKFKNKKVIKIDPGAAFGTGSHPTTSLCLEELEKFSLSNKKILDIGSGSGILSIAARYFGASKVYSIDNDYLAINSTESNFRLNFGDLDDLKTYLGRFDELVSKYSLKNFDLILCNILAEVIKGIIPDIRNCLKINGEVIFSGILNSQKDEIIKLLNASNLQINDVSSKQGWVCITAQKII.

4 residues coordinate S-adenosyl-L-methionine: Thr-144, Gly-165, Asp-187, and Asn-235.

The protein belongs to the methyltransferase superfamily. PrmA family.

The protein resides in the cytoplasm. The enzyme catalyses L-lysyl-[protein] + 3 S-adenosyl-L-methionine = N(6),N(6),N(6)-trimethyl-L-lysyl-[protein] + 3 S-adenosyl-L-homocysteine + 3 H(+). In terms of biological role, methylates ribosomal protein L11. In Prochlorococcus marinus (strain MIT 9515), this protein is Ribosomal protein L11 methyltransferase.